The following is a 116-amino-acid chain: MRVKTGVVRRRRHKKVLKLARGFYSGRRKHFRKAKEQLERSMYYAFRDRKQKKRKFRSLWVVRINAACRMHETSYSRFMHALKVANIELDRKVLADMAMNDMQAFKSVLESVKEHL.

It belongs to the bacterial ribosomal protein bL20 family.

Its function is as follows. Binds directly to 23S ribosomal RNA and is necessary for the in vitro assembly process of the 50S ribosomal subunit. It is not involved in the protein synthesizing functions of that subunit. The polypeptide is Large ribosomal subunit protein bL20 (Helicobacter pylori (strain P12)).